The primary structure comprises 424 residues: Adenosylmethionine-8-amino-7-oxononanoate aminotransferase (424 aa).

Residue Trp46 coordinates substrate. A pyridoxal 5'-phosphate-binding site is contributed by 106–107 (GS). Tyr138 provides a ligand contact to substrate. Residue Asp240 participates in pyridoxal 5'-phosphate binding. Positions 269 and 303 each coordinate substrate. Lys269 bears the N6-(pyridoxal phosphate)lysine mark. 304-305 (HS) is a binding site for pyridoxal 5'-phosphate. Arg391 is a substrate binding site.

This sequence belongs to the class-III pyridoxal-phosphate-dependent aminotransferase family. BioA subfamily. Homodimer. Requires pyridoxal 5'-phosphate as cofactor.

The protein localises to the cytoplasm. The catalysed reaction is (8S)-8-amino-7-oxononanoate + S-adenosyl-L-methionine = S-adenosyl-4-methylsulfanyl-2-oxobutanoate + (7R,8S)-7,8-diammoniononanoate. The protein operates within cofactor biosynthesis; biotin biosynthesis; 7,8-diaminononanoate from 8-amino-7-oxononanoate (SAM route): step 1/1. Functionally, catalyzes the transfer of the alpha-amino group from S-adenosyl-L-methionine (SAM) to 7-keto-8-aminopelargonic acid (KAPA) to form 7,8-diaminopelargonic acid (DAPA). It is the only aminotransferase known to utilize SAM as an amino donor. Complements a bioU deletion in Synechocystis PCC 6803. The chain is Adenosylmethionine-8-amino-7-oxononanoate aminotransferase from Synechococcus elongatus (strain ATCC 33912 / PCC 7942 / FACHB-805) (Anacystis nidulans R2).